The sequence spans 471 residues: Ribulose bisphosphate carboxylase large chain (471 aa).

Position 5 is an N6,N6,N6-trimethyllysine (Lys-5). Substrate-binding residues include Asn-114 and Thr-164. Lys-166 (proton acceptor) is an active-site residue. Lys-168 is a binding site for substrate. 3 residues coordinate Mg(2+): Lys-192, Asp-194, and Glu-195. Residue Lys-192 is modified to N6-carboxylysine. The Proton acceptor role is filled by His-285. Residues Arg-286, His-318, and Ser-370 each contribute to the substrate site.

The protein belongs to the RuBisCO large chain family. Type I subfamily. As to quaternary structure, heterohexadecamer of 8 large chains and 8 small chains; disulfide-linked. The disulfide link is formed within the large subunit homodimers. The cofactor is Mg(2+). Post-translationally, the disulfide bond which can form in the large chain dimeric partners within the hexadecamer appears to be associated with oxidative stress and protein turnover.

It localises to the plastid. The protein localises to the chloroplast. It carries out the reaction 2 (2R)-3-phosphoglycerate + 2 H(+) = D-ribulose 1,5-bisphosphate + CO2 + H2O. The catalysed reaction is D-ribulose 1,5-bisphosphate + O2 = 2-phosphoglycolate + (2R)-3-phosphoglycerate + 2 H(+). Functionally, ruBisCO catalyzes two reactions: the carboxylation of D-ribulose 1,5-bisphosphate, the primary event in carbon dioxide fixation, as well as the oxidative fragmentation of the pentose substrate in the photorespiration process. Both reactions occur simultaneously and in competition at the same active site. The polypeptide is Ribulose bisphosphate carboxylase large chain (Anthocleista grandiflora (Forest fever tree)).